A 685-amino-acid chain; its full sequence is Serotransferrin (685 aa).

Residues 1-16 (MKPLLLLPLLGCLATI) form the signal peptide. 2 Transferrin-like domains span residues 23-329 (VKWC…ALKI) and 340-666 (MKWC…SLRT). A disulfide bridge links cysteine 26 with cysteine 48. 2 residues coordinate Fe(3+): aspartate 72 and tyrosine 102. Cystine bridges form between cysteine 125-cysteine 206, cysteine 170-cysteine 184, and cysteine 234-cysteine 248. Positions 127, 131, 133, and 134 each coordinate hydrogencarbonate. Tyrosine 200 is a Fe(3+) binding site. Histidine 256 is a binding site for Fe(3+). Cystine bridges form between cysteine 343–cysteine 379 and cysteine 353–cysteine 370. Fe(3+)-binding residues include aspartate 394 and tyrosine 428. 7 cysteine pairs are disulfide-bonded: cysteine 404–cysteine 678, cysteine 419–cysteine 639, cysteine 451–cysteine 526, cysteine 475–cysteine 667, cysteine 485–cysteine 499, cysteine 496–cysteine 509, and cysteine 566–cysteine 580. 4 residues coordinate hydrogencarbonate: threonine 453, arginine 457, alanine 459, and glycine 460. A glycan (N-linked (GlcNAc...) asparagine) is linked at asparagine 476. Tyrosine 520 lines the Fe(3+) pocket. A Fe(3+)-binding site is contributed by histidine 588.

This sequence belongs to the transferrin family. In terms of assembly, monomer.

The protein resides in the secreted. In terms of biological role, transferrins are iron binding transport proteins which can bind two Fe(3+) ions in association with the binding of an anion, usually bicarbonate. The polypeptide is Serotransferrin (tf) (Paralichthys olivaceus (Bastard halibut)).